A 552-amino-acid chain; its full sequence is Two-component response regulator ARR10 (552 aa).

In terms of domain architecture, Response regulatory spans 18 to 133 (RVLAVDDDQT…ELKNIWQHVV (116 aa)). Aspartate 69 is modified (4-aspartylphosphate). A disordered region spans residues 139–181 (KKNKSNVSNGSGNCDKANRKRKEQYEEEEEEERGNDNDDPTAQ). Residues 151-173 (NCDKANRKRKEQYEEEEEEERGN) adopt a coiled-coil conformation. Over residues 163–177 (YEEEEEEERGNDNDD) the composition is skewed to acidic residues. Positions 182 to 185 (KKPR) match the Nuclear localization signal motif. Residues 185-235 (RVLWTHELHNKFLAAVDHLGVERAVPKKILDLMNVDKLTRENVASHLQKFR) constitute a DNA-binding region (myb-like GARP).

It belongs to the ARR family. Type-B subfamily. In terms of assembly, binds the target DNA as a monomer. In terms of processing, two-component system major event consists of a His-to-Asp phosphorelay between a sensor histidine kinase (HK) and a response regulator (RR). In plants, the His-to-Asp phosphorelay involves an additional intermediate named Histidine-containing phosphotransfer protein (HPt). This multistep phosphorelay consists of a His-Asp-His-Asp sequential transfer of a phosphate group between first a His and an Asp of the HK protein, followed by the transfer to a conserved His of the HPt protein and finally the transfer to an Asp in the receiver domain of the RR protein. As to expression, detected in the whole plant. Predominantly expressed in roots and leaves.

It localises to the nucleus. Its function is as follows. Transcriptional activator that binds specifically to the DNA sequence 5'-[AG]GATT-3'. Functions as a response regulator involved in His-to-Asp phosphorelay signal transduction system. Phosphorylation of the Asp residue in the receiver domain activates the ability of the protein to promote the transcription of target genes. Could directly activate some type-A response regulators in response to cytokinins. This chain is Two-component response regulator ARR10 (ARR10), found in Arabidopsis thaliana (Mouse-ear cress).